We begin with the raw amino-acid sequence, 126 residues long: UPF0102 protein P9303_16141 (126 aa).

The protein belongs to the UPF0102 family.

This is UPF0102 protein P9303_16141 from Prochlorococcus marinus (strain MIT 9303).